Consider the following 908-residue polypeptide: DNA (cytosine-5)-methyltransferase 3A (908 aa).

The span at 1–13 (MPSSGPGDTSSSS) shows a compositional bias: low complexity. Disordered stretches follow at residues 1-183 (MPSS…PMPR) and 226-281 (NQAS…PEYE). Basic and acidic residues predominate over residues 14–37 (LEREDDRKEGEEQEENRGKEERQE). Basic residues predominate over residues 44–54 (KVGRPGRKRKH). Positions 69 to 80 (TTKSQPMAQDSG) are enriched in polar residues. The residue at position 102 (Ser-102) is a Phosphoserine. A compositionally biased stretch (low complexity) spans 110 to 124 (GAPAEGEGTETPPEA). Thr-120 carries the post-translational modification Phosphothreonine. A Glycyl lysine isopeptide (Lys-Gly) (interchain with G-Cter in SUMO2) cross-link involves residue Lys-158. Residue Arg-167 is modified to Omega-N-methylarginine. Positions 195–399 (SKRKRDEWLA…DSGKAVEVQN (205 aa)) are interaction with DNMT1 and DNMT3B. 2 positions are modified to phosphoserine: Ser-239 and Ser-251. Positions 242-256 (AVQQPTDPASPTVAT) are enriched in polar residues. Thr-257 carries the phosphothreonine modification. The segment covering 265 to 275 (AGDKNATKAAD) has biased composition (basic and acidic residues). The 59-residue stretch at 288 to 346 (IGELVWGKLRGFSWWPGRIVSWWMTGRSRAAEGTRWVMWFGDGKFSVVCVEKLMPLSSF) folds into the PWWP domain. 2 positions are modified to phosphoserine: Ser-386 and Ser-389. The segment at 443 to 462 (AYAPPPPAKKPRKSTTEKPK) is disordered. In terms of domain architecture, ADD spans 478–610 (EVRQKCRNIE…LQMFFANNHD (133 aa)). The GATA-type; atypical zinc finger occupies 489 to 519 (ICISCGSLNVTLEHPLFIGGMCQNCKNCFLE). Residues 490–582 (CISCGSLNVT…KEDPWNCYMC (93 aa)) form an interaction with the PRC2/EED-EZH2 complex region. The PHD-type; atypical zinc-finger motif lies at 530 to 586 (QSYCTICCGGREVLMCGNNNCCRCFCVECVDLLVGPGAAQAAIKEDPWNCYMCGHKG). The SAM-dependent MTase C5-type domain occupies 630 to 908 (IRVLSLFDGI…APLKEYFACV (279 aa)). S-adenosyl-L-methionine is bound by residues 637 to 641 (DGIAT), Glu-660, and 682 to 684 (DVR). Cys-706 is an active-site residue. At Cys-706 the chain carries S-methylcysteine; by autocatalysis. 887–889 (RSW) serves as a coordination point for S-adenosyl-L-methionine.

Belongs to the class I-like SAM-binding methyltransferase superfamily. C5-methyltransferase family. As to quaternary structure, heterotetramer composed of 1 DNMT3A homodimer and 2 DNMT3L subunits (DNMT3L-DNMT3A-DNMT3A-DNMT3L). Interacts with DNMT1 and DNMT3B. Interacts with MPHOSPH8. Interacts with histone H3 that is not methylated at 'Lys-4' (H3K4). Binds the ZBTB18 transcriptional repressor. Interacts with SETDB1. Associates with HDAC1 through its ADD domain. Interacts with UHRF1. Interacts with the PRC2/EED-EZH2 complex. Interacts with UBC9, PIAS1 and PIAS2. Interacts with SPOCD1. Interacts with ZNF263; recruited to the SIX3 promoter along with other proteins involved in chromatin modification and transcriptional corepression where it contributes to transcriptional repression. Post-translationally, auto-methylated at Cys-706: auto-methylation takes place in absence of DNA substrate and inactivates the DNA methyltransferase activity. Inactivation by auto-methylation may be used to inactivate unused DNA methyltransferases in the cell. Sumoylated; sumoylation disrupts the ability to interact with histone deacetylases (HDAC1 and HDAC2) and repress transcription. Isoform 1 is expressed ubiquitously at low levels. Expression of isoform 2 is restricted to tissues containing cells which are undergoing active de novo methylation, including spleen, testis and thymus.

The protein localises to the nucleus. It is found in the chromosome. It localises to the cytoplasm. The catalysed reaction is a 2'-deoxycytidine in DNA + S-adenosyl-L-methionine = a 5-methyl-2'-deoxycytidine in DNA + S-adenosyl-L-homocysteine + H(+). It carries out the reaction L-cysteinyl-[protein] + S-adenosyl-L-methionine = S-methyl-L-cysteinyl-[protein] + S-adenosyl-L-homocysteine + H(+). Activated by binding to the regulatory factor DNMT3L. Auto-methylation at Cys-706 in absence of DNA inactivates the DNA methyltransferase activity. Functionally, required for genome-wide de novo methylation and is essential for the establishment of DNA methylation patterns during development. DNA methylation is coordinated with methylation of histones. It modifies DNA in a non-processive manner and also methylates non-CpG sites. May preferentially methylate DNA linker between 2 nucleosomal cores and is inhibited by histone H1. Plays a role in paternal and maternal imprinting. Required for methylation of most imprinted loci in germ cells. Acts as a transcriptional corepressor for ZBTB18. Recruited to trimethylated 'Lys-36' of histone H3 (H3K36me3) sites. Can actively repress transcription through the recruitment of HDAC activity. Also has weak auto-methylation activity on Cys-706 in absence of DNA. This Mus musculus (Mouse) protein is DNA (cytosine-5)-methyltransferase 3A.